We begin with the raw amino-acid sequence, 187 residues long: Threonylcarbamoyl-AMP synthase (187 aa).

Residues 4–187 (TLTLSEAVTA…DARSGHILRL (184 aa)) form the YrdC-like domain.

This sequence belongs to the SUA5 family. TsaC subfamily.

Its subcellular location is the cytoplasm. It catalyses the reaction L-threonine + hydrogencarbonate + ATP = L-threonylcarbamoyladenylate + diphosphate + H2O. Required for the formation of a threonylcarbamoyl group on adenosine at position 37 (t(6)A37) in tRNAs that read codons beginning with adenine. Catalyzes the conversion of L-threonine, HCO(3)(-)/CO(2) and ATP to give threonylcarbamoyl-AMP (TC-AMP) as the acyladenylate intermediate, with the release of diphosphate. This chain is Threonylcarbamoyl-AMP synthase, found in Xylella fastidiosa (strain M23).